Consider the following 216-residue polypeptide: Nucleoside triphosphate pyrophosphatase (216 aa).

Residue Asp-86 is the Proton acceptor of the active site.

Belongs to the Maf family. The cofactor is a divalent metal cation.

It is found in the cytoplasm. It carries out the reaction a ribonucleoside 5'-triphosphate + H2O = a ribonucleoside 5'-phosphate + diphosphate + H(+). The enzyme catalyses a 2'-deoxyribonucleoside 5'-triphosphate + H2O = a 2'-deoxyribonucleoside 5'-phosphate + diphosphate + H(+). Its function is as follows. Nucleoside triphosphate pyrophosphatase. May have a dual role in cell division arrest and in preventing the incorporation of modified nucleotides into cellular nucleic acids. The chain is Nucleoside triphosphate pyrophosphatase from Dictyostelium discoideum (Social amoeba).